The following is a 520-amino-acid chain: GMP synthase [glutamine-hydrolyzing] (520 aa).

The Glutamine amidotransferase type-1 domain occupies 12–202 (KIIVLDFGSQ…AFDVCGCTGD (191 aa)). Cys89 serves as the catalytic Nucleophile. Residues His176 and Glu178 contribute to the active site. A GMPS ATP-PPase domain is found at 203 to 395 (WSMENFIDME…LGMPDAIVWR (193 aa)). Residue 230–236 (SGGVDSS) participates in ATP binding.

As to quaternary structure, homodimer.

It catalyses the reaction XMP + L-glutamine + ATP + H2O = GMP + L-glutamate + AMP + diphosphate + 2 H(+). It participates in purine metabolism; GMP biosynthesis; GMP from XMP (L-Gln route): step 1/1. Catalyzes the synthesis of GMP from XMP. In Enterococcus faecalis (strain ATCC 700802 / V583), this protein is GMP synthase [glutamine-hydrolyzing].